The primary structure comprises 641 residues: MELKNIEQQPQLQNGNGTATENNEKGEQKPTEGGERTNWGNGLEFLMSCISVSVGLGNVWRFPFTAYENGGGAFLIPYIIVLFLIGKPMYYLEMIIGQFTSQGSVKIWSICPSFLGVGYGQAFATVCIISYYSSLLALTLYYLFVSFQSVLPWSYCRDEWTNCVNSRPEDYSSTMLEAARNATSSLLIGNETTSLADNDSVQLQSSSELYFLNVVIKEKLDISDGVGAPDWKLTLALLVSWIVTFLVIMRGVKSSGKAAYFLAIFPYVVLFVLLGRAVTLEGAVDGIIFFLQPQWGELLNPTVWKEAVVQCFFSLAVSCGPIIMFASYNRFDHSIYRDAMIVTTLDTLTSLLGGITIFAILGNLAHNLQVDNIREVVRSGTGLAFISYPDAISKFQAVPQLFSVLFFFMLFVLGIGSIVALQSTIVTIICDQFKSWKYWKVALVTSICGFLLGLVYVTPGGQWILTLVDFYGGTYVVFILAIFELAGIVWIYGLQNFCDDIEFMCNKRVSLYWRVCWSFFTPVMMIIIFIYSMATIEPLKYSDLYFPLAGDIAGWIVFAIGTAQFPLWGIWYISHHRNGNLWQSFVSCLKPNENWGPANPETKQAWLLFKSEKARQRASKTQSSKMGQFWQKVGNFCGSST.

A compositionally biased stretch (polar residues) spans 1–21; the sequence is MELKNIEQQPQLQNGNGTATE. The tract at residues 1–37 is disordered; that stretch reads MELKNIEQQPQLQNGNGTATENNEKGEQKPTEGGERT. Over 1–38 the chain is Cytoplasmic; the sequence is MELKNIEQQPQLQNGNGTATENNEKGEQKPTEGGERTN. Positions 22–35 are enriched in basic and acidic residues; that stretch reads NNEKGEQKPTEGGE. A run of 3 helical transmembrane segments spans residues 39–59, 72–92, and 125–145; these read WGNGLEFLMSCISVSVGLGNV, GAFLIPYIIVLFLIGKPMYYL, and TVCIISYYSSLLALTLYYLFV. Residues Asn181, Asn190, and Asn198 are each glycosylated (N-linked (GlcNAc...) asparagine). 9 helical membrane-spanning segments follow: residues 229 to 249, 258 to 278, 307 to 327, 341 to 361, 401 to 421, 441 to 461, 474 to 494, 516 to 536, and 552 to 572; these read PDWKLTLALLVSWIVTFLVIM, AAYFLAIFPYVVLFVLLGRAV, AVVQCFFSLAVSCGPIIMFAS, IVTTLDTLTSLLGGITIFAIL, LFSVLFFFMLFVLGIGSIVAL, VALVTSICGFLLGLVYVTPGG, TYVVFILAIFELAGIVWIYGL, CWSFFTPVMMIIIFIYSMATI, and IAGWIVFAIGTAQFPLWGIWY.

This sequence belongs to the sodium:neurotransmitter symporter (SNF) (TC 2.A.22) family.

The protein resides in the membrane. Its function is as follows. Unusual broad substrate spectrum amino acid:sodium cotransporter that promotes absorption of the D isomers of essential amino acids. Neutral amino acids are the preferred substrates, especially methionine and phenylalanine. The sequence is that of Sodium-dependent nutrient amino acid transporter 1 from Drosophila willistoni (Fruit fly).